The chain runs to 385 residues: Serine/threonine-protein kinase 52 (385 aa).

In terms of domain architecture, Protein kinase spans Leu82–Leu356. ATP contacts are provided by residues Leu88–Val96 and Lys109. The active-site Proton acceptor is Asp227.

Belongs to the protein kinase superfamily. Ser/Thr protein kinase family. In terms of assembly, binds to CBC1. Associates with PHOT1, PHOT2, BLUS1 and PM H(+)-ATPase (e.g. AHA1). Post-translationally, autophosphorylated. Phosphorylated by HT1 in response to low CO(2) concentrations. In terms of tissue distribution, expressed in guard cells.

Its subcellular location is the cytoplasm. It is found in the cytosol. It catalyses the reaction L-seryl-[protein] + ATP = O-phospho-L-seryl-[protein] + ADP + H(+). The catalysed reaction is L-threonyl-[protein] + ATP = O-phospho-L-threonyl-[protein] + ADP + H(+). Functionally, serine/threonine protein kinase that phosphorylates proteins on serine and threonine residues. Collectively with CBC1, acts as a negative regulator of stomatal opening, probably via the inhibition of plasma membrane-type ATPases (AHA1 and AHA2) activity in guard cells, but in an abscisic acid (ABA)-independent manner. However, at low concentrations of CO(2), together with CBC1, stimulates stomatal opening via the inhibition of S-type anion channels in response to blue light (BL) and red light (RL), thus being a key component to maximize photosynthesis in the light under low CO(2) conditions. Required for temperature decrease in leaves. Downstream target of HIGH LEAF TEMPERATURE1 (HT1) during low CO(2)-induced stomatal opening. This chain is Serine/threonine-protein kinase 52, found in Arabidopsis thaliana (Mouse-ear cress).